The primary structure comprises 1004 residues: 26S proteasome non-ATPase regulatory subunit 1 homolog A (1004 aa).

Ala2 is modified (N-acetylalanine). Lys166 is covalently cross-linked (Glycyl lysine isopeptide (Lys-Gly) (interchain with G-Cter in ubiquitin)). PC repeat units follow at residues 412–447, 452–485, 487–521, 522–555, 557–590, 591–626, 627–659, 661–695, 696–736, and 739–771; these read SATAGLGVIHRGHLQQGRSLMAPYLPQGGAGGGGSP, GALYALGLIHANHGEGIKQFLRDSLRSTNVEVIQ, GACLGLGLSALGTADEEIYDDVKSVLYTDSAVAGE, AAGISMGLLLVGTATEKASEMLAYAHETQHEKII, GLALGIALTVYGREEGADTLIEQMTRDQDPIIRY, GGMYALALAYSGTANNKAIRQLLHFAVSDVSDDVRR, TAVLALGFVLYSDPEQTPRIVSLLSESYNPHVR, GAALAVGISCAGTGLSEAISLLEPLTSDVVDFVRQ, GALI…DTMS, and GAILASGILDAGGRNVTIRLLSKTKHDKVTAVI. Disordered regions lie at residues 858–905 and 959–1004; these read EQKA…KKAP and VLSL…EYAS. Ser896 carries the phosphoserine modification. A compositionally biased stretch (low complexity) spans 965-987; it reads APTSTASPATGTAAAAQGTPASA.

It belongs to the proteasome subunit S1 family. In terms of assembly, component of the 19S regulatory particle (RP/PA700) base subcomplex of the 26S proteasome. The 26S proteasome is composed of a core protease (CP), known as the 20S proteasome, capped at one or both ends by the 19S regulatory particle (RP/PA700). The RP/PA700 complex is composed of at least 17 different subunits in two subcomplexes, the base and the lid, which form the portions proximal and distal to the 20S proteolytic core, respectively. In terms of tissue distribution, ubiquitous with highest expression in flowers.

Its function is as follows. Acts as a regulatory subunit of the 26 proteasome which is involved in the ATP-dependent degradation of ubiquitinated proteins. This Arabidopsis thaliana (Mouse-ear cress) protein is 26S proteasome non-ATPase regulatory subunit 1 homolog A (RPN2A).